The sequence spans 73 residues: Kappa-scoloptoxin(03)-Ssm1b (73 aa).

An N-terminal signal peptide occupies residues 1–23 (MKPSMAILLVIALIIFSLDKSYS). 3 disulfide bridges follow: Cys32–Cys58, Cys41–Cys57, and Cys44–Cys67.

In terms of processing, contains 3 disulfide bonds. As to expression, expressed by the venom gland.

It localises to the secreted. Its function is as follows. Inhibits voltage-gated potassium channels. The chain is Kappa-scoloptoxin(03)-Ssm1b from Scolopendra mutilans (Chinese red-headed centipede).